Reading from the N-terminus, the 276-residue chain is Diaminopimelate epimerase (276 aa).

Substrate-binding residues include asparagine 13, glutamine 46, and asparagine 66. The active-site Proton donor is cysteine 75. Substrate contacts are provided by residues 76-77, asparagine 159, asparagine 192, and 210-211; these read GN and ER. Cysteine 219 (proton acceptor) is an active-site residue. Substrate is bound at residue 220–221; the sequence is GT.

It belongs to the diaminopimelate epimerase family. In terms of assembly, homodimer.

Its subcellular location is the cytoplasm. It carries out the reaction (2S,6S)-2,6-diaminopimelate = meso-2,6-diaminopimelate. It functions in the pathway amino-acid biosynthesis; L-lysine biosynthesis via DAP pathway; DL-2,6-diaminopimelate from LL-2,6-diaminopimelate: step 1/1. Functionally, catalyzes the stereoinversion of LL-2,6-diaminopimelate (L,L-DAP) to meso-diaminopimelate (meso-DAP), a precursor of L-lysine and an essential component of the bacterial peptidoglycan. This Ectopseudomonas mendocina (strain ymp) (Pseudomonas mendocina) protein is Diaminopimelate epimerase.